The sequence spans 327 residues: Tryptophan--tRNA ligase (327 aa).

Residues 9–11 and 17–18 contribute to the ATP site; these read RPT and GN. The 'HIGH' region motif lies at 10 to 18; sequence PTGNLHLGN. Asp-133 is a binding site for L-tryptophan. ATP is bound by residues 145-147, Val-186, and 194-198; these read GKD and KMGKS. The short motif at 194–198 is the 'KMSKS' region element; it reads KMGKS.

It belongs to the class-I aminoacyl-tRNA synthetase family. Homodimer.

It is found in the cytoplasm. It carries out the reaction tRNA(Trp) + L-tryptophan + ATP = L-tryptophyl-tRNA(Trp) + AMP + diphosphate + H(+). Catalyzes the attachment of tryptophan to tRNA(Trp). The sequence is that of Tryptophan--tRNA ligase from Porphyromonas gingivalis (strain ATCC BAA-308 / W83).